We begin with the raw amino-acid sequence, 135 residues long: ATP synthase epsilon chain (135 aa).

The protein belongs to the ATPase epsilon chain family. In terms of assembly, F-type ATPases have 2 components, CF(1) - the catalytic core - and CF(0) - the membrane proton channel. CF(1) has five subunits: alpha(3), beta(3), gamma(1), delta(1), epsilon(1). CF(0) has three main subunits: a, b and c.

The protein localises to the cell inner membrane. Functionally, produces ATP from ADP in the presence of a proton gradient across the membrane. This is ATP synthase epsilon chain from Rhizobium johnstonii (strain DSM 114642 / LMG 32736 / 3841) (Rhizobium leguminosarum bv. viciae).